Here is a 556-residue protein sequence, read N- to C-terminus: Formate--tetrahydrofolate ligase (556 aa).

65–72 (TPAGEGKS) is a binding site for ATP.

Belongs to the formate--tetrahydrofolate ligase family.

It catalyses the reaction (6S)-5,6,7,8-tetrahydrofolate + formate + ATP = (6R)-10-formyltetrahydrofolate + ADP + phosphate. The protein operates within one-carbon metabolism; tetrahydrofolate interconversion. The protein is Formate--tetrahydrofolate ligase of Enterococcus faecalis (strain ATCC 700802 / V583).